A 545-amino-acid polypeptide reads, in one-letter code: CTP synthase (545 aa).

Positions Met-1–Leu-265 are amidoligase domain. A CTP-binding site is contributed by Ser-13. Ser-13 contributes to the UTP binding site. Residues Ser-14–Ile-19 and Asp-71 each bind ATP. Residues Asp-71 and Glu-139 each contribute to the Mg(2+) site. Residues Asp-146–Glu-148, Lys-186–Gln-191, and Lys-222 contribute to the CTP site. Residues Lys-186–Gln-191 and Lys-222 contribute to the UTP site. The Glutamine amidotransferase type-1 domain maps to Lys-290–Glu-541. Gly-351 is a binding site for L-glutamine. Residue Cys-378 is the Nucleophile; for glutamine hydrolysis of the active site. L-glutamine is bound by residues Leu-379–Gln-382, Glu-402, and Arg-469. Catalysis depends on residues His-514 and Glu-516.

Belongs to the CTP synthase family. Homotetramer.

The catalysed reaction is UTP + L-glutamine + ATP + H2O = CTP + L-glutamate + ADP + phosphate + 2 H(+). It carries out the reaction L-glutamine + H2O = L-glutamate + NH4(+). It catalyses the reaction UTP + NH4(+) + ATP = CTP + ADP + phosphate + 2 H(+). It functions in the pathway pyrimidine metabolism; CTP biosynthesis via de novo pathway; CTP from UDP: step 2/2. With respect to regulation, allosterically activated by GTP, when glutamine is the substrate; GTP has no effect on the reaction when ammonia is the substrate. The allosteric effector GTP functions by stabilizing the protein conformation that binds the tetrahedral intermediate(s) formed during glutamine hydrolysis. Inhibited by the product CTP, via allosteric rather than competitive inhibition. Its function is as follows. Catalyzes the ATP-dependent amination of UTP to CTP with either L-glutamine or ammonia as the source of nitrogen. Regulates intracellular CTP levels through interactions with the four ribonucleotide triphosphates. This chain is CTP synthase, found in Legionella pneumophila (strain Lens).